The chain runs to 233 residues: Glyceraldehyde 3-phosphate phosphatase (233 aa).

Belongs to the HAD-like hydrolase superfamily. It depends on Mg(2+) as a cofactor.

Functionally, catalyzes the dephosphorylation of D,L-glyceraldehyde 3-phosphate in vitro. This is Glyceraldehyde 3-phosphate phosphatase from Methanopyrus kandleri (strain AV19 / DSM 6324 / JCM 9639 / NBRC 100938).